The primary structure comprises 930 residues: Isoleucine--tRNA ligase (930 aa).

Residues 57–67 (PYANGHLHLGH) carry the 'HIGH' region motif. L-isoleucyl-5'-AMP is bound at residue Glu-555. A 'KMSKS' region motif is present at residues 596-600 (KMSKS). Lys-599 contributes to the ATP binding site. Zn(2+) contacts are provided by Cys-896, Cys-899, Cys-916, and Cys-919.

This sequence belongs to the class-I aminoacyl-tRNA synthetase family. IleS type 1 subfamily. As to quaternary structure, monomer. Zn(2+) is required as a cofactor.

Its subcellular location is the cytoplasm. It carries out the reaction tRNA(Ile) + L-isoleucine + ATP = L-isoleucyl-tRNA(Ile) + AMP + diphosphate. In terms of biological role, catalyzes the attachment of isoleucine to tRNA(Ile). As IleRS can inadvertently accommodate and process structurally similar amino acids such as valine, to avoid such errors it has two additional distinct tRNA(Ile)-dependent editing activities. One activity is designated as 'pretransfer' editing and involves the hydrolysis of activated Val-AMP. The other activity is designated 'posttransfer' editing and involves deacylation of mischarged Val-tRNA(Ile). The protein is Isoleucine--tRNA ligase of Moorella thermoacetica (strain ATCC 39073 / JCM 9320).